Reading from the N-terminus, the 20-residue chain is Sperm acrosome membrane-associated protein 3, processed form (20 aa).

The protein belongs to the glycosyl hydrolase 22 family.

In terms of biological role, sperm surface membrane protein that may be involved in sperm-egg plasma membrane adhesion and fusion during fertilization. It could be a potential receptor for the egg oligosaccharide residue N-acetylglucosamine, which is present in the extracellular matrix over the egg plasma membrane. The protein is Sperm acrosome membrane-associated protein 3, processed form (SPACA3) of Vulpes vulpes (Red fox).